We begin with the raw amino-acid sequence, 348 residues long: D-alanine--D-alanine ligase (348 aa).

The region spanning 132 to 334 (KRILEVAGVP…YSDIIKELVV (203 aa)) is the ATP-grasp domain. 162–217 (LEKLTFPVFVKPANMGSSVGISKAENESELRSAIDLALKYDSRILIEQGVVAREIE) contributes to the ATP binding site. Positions 288, 301, and 303 each coordinate Mg(2+).

Belongs to the D-alanine--D-alanine ligase family. Requires Mg(2+) as cofactor. It depends on Mn(2+) as a cofactor.

It localises to the cytoplasm. The catalysed reaction is 2 D-alanine + ATP = D-alanyl-D-alanine + ADP + phosphate + H(+). Its pathway is cell wall biogenesis; peptidoglycan biosynthesis. Its function is as follows. Cell wall formation. The chain is D-alanine--D-alanine ligase from Streptococcus thermophilus (strain CNRZ 1066).